The sequence spans 153 residues: Pheromone-binding protein Gp-9 (153 aa).

Residues 1-19 (MKTFVLHIFIFALVAFASA) form the signal peptide. Cystine bridges form between C37–C77, C73–C129, and C118–C138.

The protein belongs to the PBP/GOBP family. In terms of assembly, homodimer.

The protein localises to the secreted. Colony queen number, a major feature of social organization, is associated with worker genotype for Gp-9. Colonies are headed by either a single reproductive queen (monogyne form) or multiple queens (polygyne form). Differences in worker Gp-9 genotypes between social forms may cause differences in workers' abilities to recognize queens and regulate their numbers. In Solenopsis substituta (Fire ant), this protein is Pheromone-binding protein Gp-9.